Consider the following 390-residue polypeptide: Sister chromatid cohesion protein DCC1 (390 aa).

This sequence belongs to the DCC1 family. As to quaternary structure, component of the ctf18-RFC complex which consists of ctf18, ctf8, dscc1 and the RFC complex.

The protein resides in the nucleus. Loads pcna onto primed templates regulating velocity, spacing and restart activity of replication forks. May couple DNA replication to sister chromatid cohesion. This chain is Sister chromatid cohesion protein DCC1 (dscc1), found in Xenopus laevis (African clawed frog).